We begin with the raw amino-acid sequence, 202 residues long: Peptidyl-tRNA hydrolase (202 aa).

Tyr19 is a binding site for tRNA. His24 (proton acceptor) is an active-site residue. TRNA contacts are provided by Tyr70, Asn72, and Asn118.

This sequence belongs to the PTH family. As to quaternary structure, monomer.

It localises to the cytoplasm. The catalysed reaction is an N-acyl-L-alpha-aminoacyl-tRNA + H2O = an N-acyl-L-amino acid + a tRNA + H(+). Functionally, hydrolyzes ribosome-free peptidyl-tRNAs (with 1 or more amino acids incorporated), which drop off the ribosome during protein synthesis, or as a result of ribosome stalling. Its function is as follows. Catalyzes the release of premature peptidyl moieties from peptidyl-tRNA molecules trapped in stalled 50S ribosomal subunits, and thus maintains levels of free tRNAs and 50S ribosomes. The sequence is that of Peptidyl-tRNA hydrolase from Prochlorococcus marinus (strain NATL2A).